A 214-amino-acid chain; its full sequence is UPF0301 protein NFA_55110 (214 aa).

The disordered stretch occupies residues Met-1 to Phe-24.

This sequence belongs to the UPF0301 (AlgH) family.

The sequence is that of UPF0301 protein NFA_55110 from Nocardia farcinica (strain IFM 10152).